The primary structure comprises 822 residues: IQ and AAA domain-containing protein 1-like (822 aa).

Positions 206–235 (QDQGAIVIQKVWKGYLQRKRIEQDRRMEME) constitute an IQ domain. Over residues 338–363 (RQELEAQAQENKKKEQEKNKDKVKEK) the composition is skewed to basic and acidic residues. Disordered regions lie at residues 338 to 378 (RQEL…KAKK) and 457 to 484 (REET…KDLT). Basic residues predominate over residues 464–479 (KSPKKKGGKKSGKKKK). 569 to 576 (GPSGMGKK) provides a ligand contact to ATP.

It belongs to the AAA ATPase family.

This Rattus norvegicus (Rat) protein is IQ and AAA domain-containing protein 1-like (Iqca1l).